Reading from the N-terminus, the 549-residue chain is Myotubularin-related protein 9 (549 aa).

N-acetylmethionine is present on Met1. One can recognise a GRAM domain in the interval 4–99; sequence AELIKTPRVD…LNIASSIEAL (96 aa). The region spanning 123 to 498 is the Myotubularin phosphatase domain; sequence GWHSFLPEQE…QSLPLWEGIF (376 aa). Positions 508-542 form a coiled coil; the sequence is LDEAYEEMVNIIEYNKELQAKVNILRRQLAELETE. At Ser548 the chain carries Phosphoserine.

It belongs to the protein-tyrosine phosphatase family. Non-receptor class myotubularin subfamily. As to quaternary structure, homodimer. Heterodimer (via C-terminus) with lipid phosphatase MTMR6 (via C-terminus). Heterodimer (via coiled coil domain) with lipid phosphatase MTMR7 (via C-terminus). Heterodimer with lipid phosphatase MTMR8. As to expression, expressed in many tissues.

The protein resides in the cytoplasm. The protein localises to the cell projection. Its subcellular location is the ruffle membrane. It is found in the perinuclear region. It localises to the endoplasmic reticulum. Functionally, acts as an adapter for myotubularin-related phosphatases. Increases lipid phosphatase MTMR6 catalytic activity, specifically towards phosphatidylinositol 3,5-bisphosphate and MTMR6 binding affinity for phosphorylated phosphatidylinositols. Positively regulates lipid phosphatase MTMR7 catalytic activity. Increases MTMR8 catalytic activity towards phosphatidylinositol 3-phosphate. The formation of the MTMR6-MTMR9 complex, stabilizes both MTMR6 and MTMR9 protein levels. Stabilizes MTMR8 protein levels. Plays a role in the late stages of macropinocytosis possibly by regulating MTMR6-mediated dephosphorylation of phosphatidylinositol 3-phosphate in membrane ruffles. Negatively regulates autophagy, in part via its association with MTMR8. Negatively regulates DNA damage-induced apoptosis, in part via its association with MTMR6. Does not bind mono-, di- and tri-phosphorylated phosphatidylinositols, phosphatidic acid and phosphatidylserine. The protein is Myotubularin-related protein 9 (MTMR9) of Homo sapiens (Human).